Reading from the N-terminus, the 289-residue chain is Syntaxin-2 (289 aa).

Residues 1 to 265 are Cytoplasmic-facing; it reads MRDRLPDLTA…KYQSKARRKK (265 aa). The stretch at 68-101 forms a coiled coil; the sequence is EGKIKEELEDLDKEIKKTANRIRGKLKSIEQSCD. In terms of domain architecture, t-SNARE coiled-coil homology spans 192 to 254; the sequence is LNEIESRHKD…EHAKEETKKA (63 aa). The chain crosses the membrane as a helical; Anchor for type IV membrane protein span at residues 266–289; the sequence is WIIAAVAVAVIAVLALIIGLSVGK.

Belongs to the syntaxin family. As to quaternary structure, interacts with SYT6 and SYT8; the interaction is Ca(2+)-dependent.

It localises to the membrane. Functionally, essential for epithelial morphogenesis. May mediate Ca(2+)-regulation of exocytosis acrosomal reaction in sperm. The chain is Syntaxin-2 (Stx2) from Mus musculus (Mouse).